The sequence spans 340 residues: MVNVLINGYGSIGKRVADAVAKQDDMKVIGVTKTKPDFEARMAVEKGYKLFAAIPERKHLFEEAGIPVEGTLDDIIEDADIVVDGAPKKIGKANLENVYKKHGVKAIIQGGEKAGDAQDSFNSLWSYNRCYGKDYIRLVSCNTTGLCRSMYAINSVADILKARIVLIRRAADPNDVKTGPVNAIVPNPVSVPSHHGPDVVSVIPELDGKIMTSAVIVPTTLMHMHSIMVETSGTNRDEIIDALAKTPRILTLKASEGFDSTAKIIEYARDLGRSRYDLNEIAVWEESVNVVDNEVYMMQAIHQESDVIPENVDCIRAMLEMESDNLKSIEKTNKAMGLIK.

NAD(+) is bound by residues 11–12 and G111; that span reads SI. 140–142 provides a ligand contact to D-glyceraldehyde 3-phosphate; it reads SCN. Residue C141 is the Nucleophile of the active site. R169 serves as a coordination point for NAD(+). Residue 195–196 participates in D-glyceraldehyde 3-phosphate binding; that stretch reads HG. Q303 lines the NAD(+) pocket.

It belongs to the glyceraldehyde-3-phosphate dehydrogenase family. In terms of assembly, homotetramer.

The protein resides in the cytoplasm. The catalysed reaction is D-glyceraldehyde 3-phosphate + phosphate + NADP(+) = (2R)-3-phospho-glyceroyl phosphate + NADPH + H(+). It catalyses the reaction D-glyceraldehyde 3-phosphate + phosphate + NAD(+) = (2R)-3-phospho-glyceroyl phosphate + NADH + H(+). The protein operates within carbohydrate degradation; glycolysis; pyruvate from D-glyceraldehyde 3-phosphate: step 1/5. The sequence is that of Glyceraldehyde-3-phosphate dehydrogenase from Methanococcus maripaludis (strain C6 / ATCC BAA-1332).